A 512-amino-acid polypeptide reads, in one-letter code: MVPSQEEPAAERETNEAQPPGPAPSDDAPLPGPGPSDVSDVAAEKVEVELTRSAGSEPPVPPEGGWGWLVMLAAMWCNGSVFGIQNAYGVLFVSMLDTFKAKDDDNMAFKTAWVGSLSMGMIFFCCPIVSVFTDMFGCRRTAVVGAAVGFIGLMSSSFVSSIEPLYLTYGIIFACGCSFAYQPSLVILGHYFKKRLGLVNGIVTAGSSVFTILLPLLLGNLISSVKLFNTLRILCIFMFVLFLAGFTYRPLVPSTKEKESGGSRSSFFSRRKLSPPKKVFNFALFKETTYAVWAAGIPLALFGYFVPYVHLMNHVKERFQDVNNKEVLFMCIGITSGVGRLLFGRIADYLPGVKKVYLQVLSFFFIGLMSMMIPLCSAFGALIAVCLAMGLFDGCFISIMAPIAFELVGPQDASQAIGFLLGFMSIPMTVGPPIAGLLHDKLGTYDVAFYLAGIPPFVGGVVLCLIPWIHSKKQRKISKNAGGEKMEKMLENQSSLLSGSSGIFKKDSASII.

Positions 1 to 44 (MVPSQEEPAAERETNEAQPPGPAPSDDAPLPGPGPSDVSDVAAE) are disordered. The Cytoplasmic segment spans residues 1-63 (MVPSQEEPAA…AGSEPPVPPE (63 aa)). A helical transmembrane segment spans residues 64–84 (GGWGWLVMLAAMWCNGSVFGI). The Extracellular segment spans residues 85–111 (QNAYGVLFVSMLDTFKAKDDDNMAFKT). The chain crosses the membrane as a helical span at residues 112–132 (AWVGSLSMGMIFFCCPIVSVF). The Cytoplasmic segment spans residues 133 to 141 (TDMFGCRRT). Residues 142 to 162 (AVVGAAVGFIGLMSSSFVSSI) traverse the membrane as a helical segment. The Extracellular portion of the chain corresponds to 163–168 (EPLYLT). The helical transmembrane segment at 169-189 (YGIIFACGCSFAYQPSLVILG) threads the bilayer. Over 190-201 (HYFKKRLGLVNG) the chain is Cytoplasmic. Residues 202–222 (IVTAGSSVFTILLPLLLGNLI) form a helical membrane-spanning segment. Over 223–232 (SSVKLFNTLR) the chain is Extracellular. Residues 233–253 (ILCIFMFVLFLAGFTYRPLVP) traverse the membrane as a helical segment. The Cytoplasmic segment spans residues 254 to 291 (STKEKESGGSRSSFFSRRKLSPPKKVFNFALFKETTYA). A Phosphoserine modification is found at serine 260. A helical membrane pass occupies residues 292-312 (VWAAGIPLALFGYFVPYVHLM). Residues 313 to 326 (NHVKERFQDVNNKE) are Extracellular-facing. Residues 327–347 (VLFMCIGITSGVGRLLFGRIA) traverse the membrane as a helical segment. The Cytoplasmic segment spans residues 348 to 362 (DYLPGVKKVYLQVLS). A helical membrane pass occupies residues 363–383 (FFFIGLMSMMIPLCSAFGALI). Alanine 384 is a topological domain (extracellular). The chain crosses the membrane as a helical span at residues 385–405 (VCLAMGLFDGCFISIMAPIAF). Residues 406 to 416 (ELVGPQDASQA) lie on the Cytoplasmic side of the membrane. The helical transmembrane segment at 417–437 (IGFLLGFMSIPMTVGPPIAGL) threads the bilayer. Residues 438–448 (LHDKLGTYDVA) are Extracellular-facing. A helical transmembrane segment spans residues 449–469 (FYLAGIPPFVGGVVLCLIPWI). Over 470 to 512 (HSKKQRKISKNAGGEKMEKMLENQSSLLSGSSGIFKKDSASII) the chain is Cytoplasmic. Serine 495, serine 498, serine 500, and serine 501 each carry phosphoserine.

This sequence belongs to the major facilitator superfamily. Monocarboxylate porter (TC 2.A.1.13) family. Not N-glycosylated. In terms of tissue distribution, highly expressed in small intestine, particularly in jejunum and ileum, scarcely in colon and substantially in kidney, liver and skeletal muscle. In the brain expression is low and appears to be restricted to a subset of neurons, microglia cells, and oligodendrocytes.

It is found in the cell membrane. The protein resides in the basolateral cell membrane. It catalyses the reaction L-tryptophan(in) = L-tryptophan(out). The enzyme catalyses L-tyrosine(in) = L-tyrosine(out). It carries out the reaction L-phenylalanine(in) = L-phenylalanine(out). The catalysed reaction is 3,3',5-triiodo-L-thyronine(out) = 3,3',5-triiodo-L-thyronine(in). It catalyses the reaction L-thyroxine(out) = L-thyroxine(in). Sodium- and proton-independent thyroid hormones and aromatic acids transporter. Mediates both uptake and efflux of 3,5,3'-triiodothyronine (T3) and 3,5,3',5'-tetraiodothyronine (T4) with high affinity, suggesting a role in the homeostasis of thyroid hormone levels. Responsible for low affinity bidirectional transport of the aromatic amino acids, such as phenylalanine, tyrosine, tryptophan and L-3,4-dihydroxyphenylalanine (L-dopa). Plays an important role in homeostasis of aromatic amino acids. The sequence is that of Monocarboxylate transporter 10 (Slc16a10) from Mus musculus (Mouse).